The sequence spans 284 residues: Protein-S-isoprenylcysteine O-methyltransferase (284 aa).

Topologically, residues 1–16 (MAGCAARAPPGSEARL) are cytoplasmic. Residues 17–33 (SLATFLLGASVLALPLL) form a helical membrane-spanning segment. Over 34 to 41 (TRAGLQGR) the chain is Lumenal. Residues 42 to 59 (TGLALYVAGLNALLLLLY) form a helical membrane-spanning segment. At 60-69 (RPPRYQIAIR) the chain is on the cytoplasmic side. The helical transmembrane segment at 70–87 (ACFLGFVFGCGTLLSFSQ) threads the bilayer. Residues 88–92 (SSWSH) are Lumenal-facing. A helical membrane pass occupies residues 93–112 (FGWYMCSLSLFHYSEYLVTA). Residues 113–131 (VNNPKSLSLDSFLLNHSLE) lie on the Cytoplasmic side of the membrane. A helical membrane pass occupies residues 132 to 149 (YTVAALSSWLEFTLENIF). Topologically, residues 150 to 154 (WPELK) are lumenal. A helical membrane pass occupies residues 155–174 (QITWLSVTGLLMVVFGECLR). Residues 175–212 (KAAMFTAGSNFNHVVQNEKSDTHTLVTSGVYAWFRHPS) are Cytoplasmic-facing. S-adenosyl-L-methionine contacts are provided by residues Gln-190, 197-200 (HTLV), Tyr-205, and 210-213 (HPSY). The helical transmembrane segment at 213–228 (YVGWFYWSIGTQVMLC) threads the bilayer. A topological domain (lumenal) is located at residue Asn-229. A helical membrane pass occupies residues 230–244 (PICGVSYALTVWRFF). The Cytoplasmic portion of the chain corresponds to 245–284 (RDRTEEEEISLIHFFGEEYLEYKKRVPTGLPFIKGVKVDL). Substrate is bound at residue Arg-247. Glu-251 is an S-adenosyl-L-methionine binding site.

This sequence belongs to the class VI-like SAM-binding methyltransferase superfamily. Isoprenylcysteine carboxyl methyltransferase family. As to expression, ubiquitously expressed. Expressed at higher levels in the cerebellum and putamen than in other brain regions. Abundant expression seen in the Purkinje cells and pontine neurons.

Its subcellular location is the endoplasmic reticulum membrane. It catalyses the reaction [protein]-C-terminal S-[(2E,6E)-farnesyl]-L-cysteine + S-adenosyl-L-methionine = [protein]-C-terminal S-[(2E,6E)-farnesyl]-L-cysteine methyl ester + S-adenosyl-L-homocysteine. With respect to regulation, competitively inhibited by N-acetyl-S-trans,trans-farnesyl-l-cysteine (AFC). Functionally, catalyzes the post-translational methylation of isoprenylated C-terminal cysteine residues. The chain is Protein-S-isoprenylcysteine O-methyltransferase (ICMT) from Homo sapiens (Human).